The sequence spans 333 residues: Cytochrome f (333 aa).

Positions 1–44 (MRNASVTARLTRSVRAIVKTLLIAIATVTFYFSCDLALPQSAAA) are cleaved as a signal peptide. The heme site is built by Y45, C66, C69, and H70. The helical transmembrane segment at 301–318 (GLIAFVALVMLAQVMLVL) threads the bilayer.

This sequence belongs to the cytochrome f family. In terms of assembly, the 4 large subunits of the cytochrome b6-f complex are cytochrome b6, subunit IV (17 kDa polypeptide, PetD), cytochrome f and the Rieske protein, while the 4 small subunits are PetG, PetL, PetM and PetN. The complex functions as a dimer. The cofactor is heme.

It is found in the cellular thylakoid membrane. Functionally, component of the cytochrome b6-f complex, which mediates electron transfer between photosystem II (PSII) and photosystem I (PSI), cyclic electron flow around PSI, and state transitions. The sequence is that of Cytochrome f (petA) from Desmonostoc sp. (strain PCC 7906) (Nostoc sp. (strain PCC 7906)).